Reading from the N-terminus, the 147-residue chain is Large ribosomal subunit protein uL15 (147 aa).

Residues 1–45 (MTIKLHHLRPAPGAKSDKIRVGRGEGGKRGKTAGRGTKGTKARKN) are disordered. A compositionally biased stretch (basic and acidic residues) spans 15–28 (KSDKIRVGRGEGGK).

It belongs to the universal ribosomal protein uL15 family. In terms of assembly, part of the 50S ribosomal subunit.

Its function is as follows. Binds to the 23S rRNA. In Rhodococcus jostii (strain RHA1), this protein is Large ribosomal subunit protein uL15.